The sequence spans 565 residues: Arginine--tRNA ligase (565 aa).

The 'HIGH' region signature appears at 128–138; it reads ANPTGPLHVGH.

It belongs to the class-I aminoacyl-tRNA synthetase family. Monomer.

The protein resides in the cytoplasm. It catalyses the reaction tRNA(Arg) + L-arginine + ATP = L-arginyl-tRNA(Arg) + AMP + diphosphate. This is Arginine--tRNA ligase from Albidiferax ferrireducens (strain ATCC BAA-621 / DSM 15236 / T118) (Rhodoferax ferrireducens).